The following is a 236-amino-acid chain: Pyridoxal 5'-phosphate synthase subunit PdxT (236 aa).

61–63 (GES) provides a ligand contact to L-glutamine. Cys93 serves as the catalytic Nucleophile. L-glutamine is bound by residues Arg127 and 163–164 (IR). Residues His215 and Glu217 each act as charge relay system in the active site.

Belongs to the glutaminase PdxT/SNO family. In the presence of PdxS, forms a dodecamer of heterodimers. Only shows activity in the heterodimer.

It catalyses the reaction aldehydo-D-ribose 5-phosphate + D-glyceraldehyde 3-phosphate + L-glutamine = pyridoxal 5'-phosphate + L-glutamate + phosphate + 3 H2O + H(+). The catalysed reaction is L-glutamine + H2O = L-glutamate + NH4(+). It functions in the pathway cofactor biosynthesis; pyridoxal 5'-phosphate biosynthesis. Functionally, catalyzes the hydrolysis of glutamine to glutamate and ammonia as part of the biosynthesis of pyridoxal 5'-phosphate. The resulting ammonia molecule is channeled to the active site of PdxS. In Pseudarthrobacter chlorophenolicus (strain ATCC 700700 / DSM 12829 / CIP 107037 / JCM 12360 / KCTC 9906 / NCIMB 13794 / A6) (Arthrobacter chlorophenolicus), this protein is Pyridoxal 5'-phosphate synthase subunit PdxT.